The primary structure comprises 582 residues: DNA mismatch repair protein MutL (582 aa).

It belongs to the DNA mismatch repair MutL/HexB family.

Its function is as follows. This protein is involved in the repair of mismatches in DNA. It is required for dam-dependent methyl-directed DNA mismatch repair. May act as a 'molecular matchmaker', a protein that promotes the formation of a stable complex between two or more DNA-binding proteins in an ATP-dependent manner without itself being part of a final effector complex. The protein is DNA mismatch repair protein MutL of Acidiphilium cryptum (strain JF-5).